The sequence spans 114 residues: T cell receptor beta variable 5-8 (114 aa).

The N-terminal stretch at 1–21 (MGPRLLFWALLCLLGTGPVEA) is a signal peptide. The Ig-like domain occupies 22–114 (GVTQSPTHLI…SALYLCASSL (93 aa)). Cys-42 and Cys-110 are joined by a disulfide. Asn-90 is a glycosylation site (N-linked (GlcNAc...) asparagine).

Alpha-beta TR is a heterodimer composed of an alpha and beta chain; disulfide-linked. The alpha-beta TR is associated with the transmembrane signaling CD3 coreceptor proteins to form the TR-CD3 (TcR or TCR). The assembly of alpha-beta TR heterodimers with CD3 occurs in the endoplasmic reticulum where a single alpha-beta TR heterodimer associates with one CD3D-CD3E heterodimer, one CD3G-CD3E heterodimer and one CD247 homodimer forming a stable octameric structure. CD3D-CD3E and CD3G-CD3E heterodimers preferentially associate with TR alpha and TR beta chains, respectively. The association of the CD247 homodimer is the last step of TcR assembly in the endoplasmic reticulum and is required for transport to the cell surface.

The protein localises to the cell membrane. Its function is as follows. V region of the variable domain of T cell receptor (TR) beta chain that participates in the antigen recognition. Alpha-beta T cell receptors are antigen specific receptors which are essential to the immune response and are present on the cell surface of T lymphocytes. Recognize peptide-major histocompatibility (MH) (pMH) complexes that are displayed by antigen presenting cells (APC), a prerequisite for efficient T cell adaptive immunity against pathogens. Binding of alpha-beta TR to pMH complex initiates TR-CD3 clustering on the cell surface and intracellular activation of LCK that phosphorylates the ITAM motifs of CD3G, CD3D, CD3E and CD247 enabling the recruitment of ZAP70. In turn ZAP70 phosphorylates LAT, which recruits numerous signaling molecules to form the LAT signalosome. The LAT signalosome propagates signal branching to three major signaling pathways, the calcium, the mitogen-activated protein kinase (MAPK) kinase and the nuclear factor NF-kappa-B (NF-kB) pathways, leading to the mobilization of transcription factors that are critical for gene expression and essential for T cell growth and differentiation. The T cell repertoire is generated in the thymus, by V-(D)-J rearrangement. This repertoire is then shaped by intrathymic selection events to generate a peripheral T cell pool of self-MH restricted, non-autoaggressive T cells. Post-thymic interaction of alpha-beta TR with the pMH complexes shapes TR structural and functional avidity. The sequence is that of T cell receptor beta variable 5-8 from Homo sapiens (Human).